The primary structure comprises 418 residues: Serine/threonine transporter SstT (418 aa).

8 helical membrane passes run 21 to 41, 49 to 69, 83 to 103, 142 to 162, 190 to 210, 217 to 237, 299 to 319, and 331 to 351; these read ILIG…AAIA, FVGA…IASI, ILFL…VVSF, ALLN…GIAL, FAPL…GFGA, LLVV…PLIV, MAGA…TLGI, and VVAA…LLLI.

This sequence belongs to the dicarboxylate/amino acid:cation symporter (DAACS) (TC 2.A.23) family.

The protein resides in the cell inner membrane. It carries out the reaction L-serine(in) + Na(+)(in) = L-serine(out) + Na(+)(out). The enzyme catalyses L-threonine(in) + Na(+)(in) = L-threonine(out) + Na(+)(out). In terms of biological role, involved in the import of serine and threonine into the cell, with the concomitant import of sodium (symport system). The protein is Serine/threonine transporter SstT of Yersinia pestis bv. Antiqua (strain Antiqua).